Consider the following 260-residue polypeptide: uncharacterized protein (260 aa).

A coiled-coil region spans residues 214-252 (IHQFIETEIERIMEAAKELKAEKKDMTSELNRLLLNTVE).

This is an uncharacterized protein from Bacillus subtilis (strain 168).